The sequence spans 320 residues: 4-hydroxythreonine-4-phosphate dehydrogenase (320 aa).

T132 contributes to the substrate binding site. Residues H161, H205, and H258 each contribute to the a divalent metal cation site. Substrate-binding residues include K266, N275, and R284.

It belongs to the PdxA family. As to quaternary structure, homodimer. A divalent metal cation serves as cofactor.

It is found in the cytoplasm. It carries out the reaction 4-(phosphooxy)-L-threonine + NAD(+) = 3-amino-2-oxopropyl phosphate + CO2 + NADH. The protein operates within cofactor biosynthesis; pyridoxine 5'-phosphate biosynthesis; pyridoxine 5'-phosphate from D-erythrose 4-phosphate: step 4/5. Catalyzes the NAD(P)-dependent oxidation of 4-(phosphooxy)-L-threonine (HTP) into 2-amino-3-oxo-4-(phosphooxy)butyric acid which spontaneously decarboxylates to form 3-amino-2-oxopropyl phosphate (AHAP). In Aquifex aeolicus (strain VF5), this protein is 4-hydroxythreonine-4-phosphate dehydrogenase.